Reading from the N-terminus, the 391-residue chain is Somatostatin receptor type 1 (391 aa).

The segment at 1-50 (MFPNGTASSPSSSPSPSPGSCGEGACSRGPGSGAADGMEEPGRNASQNGT) is disordered. The Extracellular portion of the chain corresponds to 1–56 (MFPNGTASSPSSSPSPSPGSCGEGACSRGPGSGAADGMEEPGRNASQNGTLSEGQG). N-linked (GlcNAc...) asparagine glycosylation is present at Asn4. Residues 8 to 20 (SSPSSSPSPSPGS) show a composition bias toward low complexity. N-linked (GlcNAc...) asparagine glycosylation is found at Asn44 and Asn48. A helical membrane pass occupies residues 57 to 84 (SAILISFIYSVVCLVGLCGNSMVIYVIL). Residues 85 to 94 (RYAKMKTATN) are Cytoplasmic-facing. A helical transmembrane segment spans residues 95–120 (IYILNLAIADELLMLSVPFLVTSTLL). The Extracellular segment spans residues 121–131 (RHWPFGALLCR). A disulfide bond links Cys130 and Cys208. Residues 132-153 (LVLSVDAVNMFTSIYCLTVLSV) traverse the membrane as a helical segment. Residues 154 to 175 (DRYVAVVHPIKAARYRRPTVAK) lie on the Cytoplasmic side of the membrane. A helical transmembrane segment spans residues 176–196 (VVNLGVWVLSLLVILPIVVFS). Residues 197–219 (RTAANSDGTVACNMLMPEPAQRW) are Extracellular-facing. The helical transmembrane segment at 220 to 244 (LVGFVLYTFLMGFLLPVGAICLCYV) threads the bilayer. At 245–270 (LIIAKMRMVALKAGWQQRKRSERKIT) the chain is on the cytoplasmic side. A helical membrane pass occupies residues 271 to 296 (LMVMMVVMVFVICWMPFYVVQLVNVF). Residues 297–303 (AEQDDAT) are Extracellular-facing. A helical transmembrane segment spans residues 304–327 (VSQLSVILGYANSCANPILYGFLS). At 328-391 (DNFKRSFQRI…GTCASRISTL (64 aa)) the chain is on the cytoplasmic side. Cys339 carries S-palmitoyl cysteine lipidation.

Belongs to the G-protein coupled receptor 1 family. As to expression, jejunum and stomach.

It is found in the cell membrane. Functionally, receptor for somatostatin with higher affinity for somatostatin-14 than -28. This receptor is coupled via pertussis toxin sensitive G proteins to inhibition of adenylyl cyclase. In addition it stimulates phosphotyrosine phosphatase and Na(+)/H(+) exchanger via pertussis toxin insensitive G proteins. In Mus musculus (Mouse), this protein is Somatostatin receptor type 1 (Sstr1).